Reading from the N-terminus, the 348-residue chain is MAFFIASSPHLRSKRSTADVMRWVLACALPGLIAQTYFFGYGTLIQLLLAISVAVALEAGIMLLRKRSPISALRDYSAVVTAWLLAVAIPPLSPWWVVVIGLIFAIVIAKHLYGGLGQNPFNPAMIAYVVLLISFPVQMTSWMAPIKLTAEPSSLVDSFSLIFGGFDSDGLSLQQIRTGIDGITMATPLDAFKTSLKAGHTMSETLTQPQFSGFAGIGWEWVNIAYLLGGLILLKLRIIRWHIPMAMLAGLVFTALLAQLFAPGTTASPMIHLLSGATMLGAFFIATDPVSASTTDKGRLIYGFFIGAMVFLIRSWGGFPDGVAFAVLLANMCVPLIDYYTKPRTYGH.

4 consecutive transmembrane segments (helical) span residues 23-43 (WVLACALPGLIAQTYFFGYGT), 44-64 (LIQLLLAISVAVALEAGIMLL), 72-91 (ALRDYSAVVTAWLLAVAIPP), and 126-146 (IAYVVLLISFPVQMTSWMAPI). Thr187 carries the FMN phosphoryl threonine modification. The next 5 membrane-spanning stretches (helical) occupy residues 214–234 (FAGIGWEWVNIAYLLGGLILL), 243–263 (IPMAMLAGLVFTALLAQLFAP), 266–286 (TASPMIHLLSGATMLGAFFIA), 300–320 (LIYGFFIGAMVFLIRSWGGFP), and 321–341 (DGVAFAVLLANMCVPLIDYYT).

It belongs to the NqrB/RnfD family. The complex is composed of six subunits: RnfA, RnfB, RnfC, RnfD, RnfE and RnfG. FMN serves as cofactor.

The protein resides in the cell inner membrane. Its function is as follows. Part of a membrane-bound complex that couples electron transfer with translocation of ions across the membrane. This Vibrio cholerae serotype O1 (strain ATCC 39315 / El Tor Inaba N16961) protein is Ion-translocating oxidoreductase complex subunit D.